The chain runs to 465 residues: Ribulose bisphosphate carboxylase large chain (465 aa).

Position 4 is an N6,N6,N6-trimethyllysine (lysine 4). Residues asparagine 113 and threonine 163 each coordinate substrate. The active-site Proton acceptor is the lysine 165. Lysine 167 contacts substrate. The Mg(2+) site is built by lysine 191, aspartate 193, and glutamate 194. An N6-carboxylysine modification is found at lysine 191. Histidine 284 serves as the catalytic Proton acceptor. Arginine 285, histidine 317, and serine 369 together coordinate substrate.

This sequence belongs to the RuBisCO large chain family. Type I subfamily. As to quaternary structure, heterohexadecamer of 8 large chains and 8 small chains; disulfide-linked. The disulfide link is formed within the large subunit homodimers. It depends on Mg(2+) as a cofactor. In terms of processing, the disulfide bond which can form in the large chain dimeric partners within the hexadecamer appears to be associated with oxidative stress and protein turnover.

It is found in the plastid. The protein localises to the chloroplast. The enzyme catalyses 2 (2R)-3-phosphoglycerate + 2 H(+) = D-ribulose 1,5-bisphosphate + CO2 + H2O. It catalyses the reaction D-ribulose 1,5-bisphosphate + O2 = 2-phosphoglycolate + (2R)-3-phosphoglycerate + 2 H(+). RuBisCO catalyzes two reactions: the carboxylation of D-ribulose 1,5-bisphosphate, the primary event in carbon dioxide fixation, as well as the oxidative fragmentation of the pentose substrate in the photorespiration process. Both reactions occur simultaneously and in competition at the same active site. The protein is Ribulose bisphosphate carboxylase large chain of Bursera inaguensis (Elaphrium inaguense).